We begin with the raw amino-acid sequence, 236 residues long: B-cell antigen receptor complex-associated protein alpha chain (236 aa).

Residues 1–32 (MPGGPGLLQALCATTFLLFLISAGGLGPGSQA) form the signal peptide. One can recognise an Ig-like C2-type domain in the interval 33-122 (LWVDGGPPSM…EKDLNQKILS (90 aa)). Topologically, residues 33-151 (LWVDGGPPSM…LDMGEGTKNN (119 aa)) are extracellular. An intrachain disulfide couples C54 to C109. N-linked (GlcNAc...) asparagine glycosylation is found at N66 and N76. The chain crosses the membrane as a helical span at residues 152–172 (IITAEGIILLFCAVVPGTLLL). Residues 173–236 (FRKRWQNMKF…GDGDVQLEKP (64 aa)) lie on the Cytoplasmic side of the membrane. In terms of domain architecture, ITAM spans 185–213 (DAQDDYEDENLYEGLNLDDCSMYEDISRG). Y196 carries the post-translational modification Phosphotyrosine; by SRC-type Tyr-kinases. Y207 carries the post-translational modification Phosphotyrosine. R212 carries the post-translational modification Asymmetric dimethylarginine; by PRMT1. A Phosphotyrosine; by Tyr-kinases modification is found at Y218.

In terms of assembly, heterodimer of alpha and beta chains; disulfide-linked. Part of the B-cell antigen receptor complex where the alpha/beta chain heterodimer is non-covalently associated with an antigen-specific membrane-bound surface immunoglobulin of two heavy chains and two light chains. Interacts through its phosphorylated ITAM domain with the SH2 domains of SYK which stimulates SYK autophosphorylation and activation. Also interacts, when phosphorylated on Tyr-207, with the SH2 domain of BLNK/SLP65, bringing BLNK into proximity with SYK and allowing SYK to phosphorylate BLNK which is necessary for trafficking of the BCR to late endosomes. Interacts with Src-family tyrosine kinases including FYN and LYN, increasing their activity. Post-translationally, phosphorylated on tyrosine, serine and threonine residues upon B-cell activation. Phosphorylation of tyrosine residues by Src-family kinases, including LYN, is an early and essential feature of the BCR signaling cascade. The phosphorylated tyrosines serve as docking sites for SH2-domain containing kinases, leading to their activation which in turn leads to phosphorylation of downstream targets. Phosphorylation of serine and threonine residues may prevent subsequent tyrosine phosphorylation. In terms of processing, arginine methylation in the ITAM domain may interfere with the binding of SYK. It promotes signals leading to B-cell differentiation.

The protein localises to the cell membrane. In terms of biological role, required in cooperation with CD79B for initiation of the signal transduction cascade activated by binding of antigen to the B-cell antigen receptor complex (BCR) which leads to internalization of the complex, trafficking to late endosomes and antigen presentation. Also required for BCR surface expression and for efficient differentiation of pro- and pre-B-cells. Stimulates SYK autophosphorylation and activation. Binds to BLNK, bringing BLNK into proximity with SYK and allowing SYK to phosphorylate BLNK. Also interacts with and increases activity of some Src-family tyrosine kinases. Represses BCR signaling during development of immature B-cells. The sequence is that of B-cell antigen receptor complex-associated protein alpha chain (CD79A) from Canis lupus familiaris (Dog).